We begin with the raw amino-acid sequence, 247 residues long: PsbP domain-containing protein 3, chloroplastic (247 aa).

The N-terminal 26 residues, 1 to 26 (MAAISPWLSSPQSFSNPRVTITDSRR), are a transit peptide targeting the chloroplast. Residues 27-80 (CSSISAAISVLDSSNEEQHRISSRDHVGMKRRDVMLQIASSVFFLPLAISPAFA) constitute a thylakoid transit peptide.

Belongs to the PsbP family.

Its subcellular location is the plastid. The protein resides in the chloroplast thylakoid lumen. The polypeptide is PsbP domain-containing protein 3, chloroplastic (PPD3) (Arabidopsis thaliana (Mouse-ear cress)).